The chain runs to 504 residues: Histidine ammonia-lyase (504 aa).

A cross-link (5-imidazolinone (Ala-Gly)) is located at residues 142-144 (ASG). Ser-143 is subject to 2,3-didehydroalanine (Ser).

The protein belongs to the PAL/histidase family. Post-translationally, contains an active site 4-methylidene-imidazol-5-one (MIO), which is formed autocatalytically by cyclization and dehydration of residues Ala-Ser-Gly.

The protein localises to the cytoplasm. The catalysed reaction is L-histidine = trans-urocanate + NH4(+). It participates in amino-acid degradation; L-histidine degradation into L-glutamate; N-formimidoyl-L-glutamate from L-histidine: step 1/3. This Staphylococcus aureus (strain MSSA476) protein is Histidine ammonia-lyase.